The following is a 445-amino-acid chain: Homogentisate 1,2-dioxygenase (445 aa).

Lysine 98 is subject to N6-acetyllysine. Fe cation is bound by residues histidine 335, glutamate 341, and histidine 371. Lysine 414 is modified (N6-succinyllysine).

The protein belongs to the homogentisate dioxygenase family. In terms of assembly, homohexamer arranged as a dimer of trimers. Fe cation serves as cofactor.

It catalyses the reaction homogentisate + O2 = 4-maleylacetoacetate + H(+). It functions in the pathway amino-acid degradation; L-phenylalanine degradation; acetoacetate and fumarate from L-phenylalanine: step 4/6. Functionally, catalyzes the conversion of homogentisate to maleylacetoacetate. In Mus musculus (Mouse), this protein is Homogentisate 1,2-dioxygenase (Hgd).